A 479-amino-acid polypeptide reads, in one-letter code: Wax ester synthase/diacylglycerol acyltransferase 2 (479 aa).

The Cytoplasmic segment spans residues 1–182 (MAIERQVTEA…VAPKKNKAKN (182 aa)). Residue H144 is the Proton acceptor of the active site. A helical membrane pass occupies residues 183-199 (VCFSLVAWLWFIVRLMF). Topologically, residues 200 to 479 (HTCVEVIKSI…PKKVFHASKV (280 aa)) are lumenal. An N-linked (GlcNAc...) asparagine glycan is attached at N253.

This sequence in the N-terminal section; belongs to the long-chain O-acyltransferase family. In terms of tissue distribution, mostly expressed in flowers and siliques and barely in roots and stems.

Its subcellular location is the cell membrane. The protein resides in the endoplasmic reticulum membrane. It catalyses the reaction an acyl-CoA + a 1,2-diacyl-sn-glycerol = a triacyl-sn-glycerol + CoA. The catalysed reaction is a long chain fatty alcohol + a fatty acyl-CoA = a wax ester + CoA. It participates in glycerolipid metabolism; triacylglycerol biosynthesis. The protein operates within lipid metabolism. Its function is as follows. Bifunctional wax ester synthase/diacylglycerol acyltransferase. Involved in cuticular wax biosynthesis. This chain is Wax ester synthase/diacylglycerol acyltransferase 2, found in Arabidopsis thaliana (Mouse-ear cress).